The following is a 130-amino-acid chain: Protein ApaG (130 aa).

Residues 3–127 (SAVTQDIQIT…FSLDSPFVRR (125 aa)) form the ApaG domain.

This chain is Protein ApaG, found in Methylocella silvestris (strain DSM 15510 / CIP 108128 / LMG 27833 / NCIMB 13906 / BL2).